A 474-amino-acid polypeptide reads, in one-letter code: Iroquois-class homeodomain protein IRX-2 (474 aa).

Residues 115–177 constitute a DNA-binding region (homeobox; TALE-type); that stretch reads DPAYRKNATR…NARRRLKKEN (63 aa). 3 disordered regions span residues 177–220, 262–373, and 420–461; these read NKMT…EDEG, EDLE…PGGS, and PGET…DTSE. Phosphoserine is present on serine 187. Over residues 196–210 the composition is skewed to basic and acidic residues; the sequence is DASRSKEESSDKAQD. Residues 262–275 are compositionally biased toward acidic residues; the sequence is EDLEDEEDEEDECE. Composition is skewed to low complexity over residues 293–305 and 358–373; these read EAPL…EAAP and PAAA…PGGS.

Belongs to the TALE/IRO homeobox family. In terms of tissue distribution, expressed in specific and overlapping patterns with Irx1 and Irx3 in the developing and adult metanephric kidney. In the adult metanephros, renal expression is found in the loop of Henle in the S3 proximal tubule segment and in the thick ascending limb (TAL) of the distal tubule.

Its subcellular location is the nucleus. This is Iroquois-class homeodomain protein IRX-2 (Irx2) from Mus musculus (Mouse).